The primary structure comprises 306 residues: Acetyl-coenzyme A carboxylase carboxyl transferase subunit beta (306 aa).

The region spanning 27-296 (LWHKCPSCDA…PRFVAPVIEP (270 aa)) is the CoA carboxyltransferase N-terminal domain. C31, C34, C50, and C53 together coordinate Zn(2+). Residues 31 to 53 (CPSCDAVLYRPELEKTLDVCPKC) form a C4-type zinc finger.

The protein belongs to the AccD/PCCB family. As to quaternary structure, acetyl-CoA carboxylase is a heterohexamer composed of biotin carboxyl carrier protein (AccB), biotin carboxylase (AccC) and two subunits each of ACCase subunit alpha (AccA) and ACCase subunit beta (AccD). Requires Zn(2+) as cofactor.

The protein resides in the cytoplasm. It carries out the reaction N(6)-carboxybiotinyl-L-lysyl-[protein] + acetyl-CoA = N(6)-biotinyl-L-lysyl-[protein] + malonyl-CoA. The protein operates within lipid metabolism; malonyl-CoA biosynthesis; malonyl-CoA from acetyl-CoA: step 1/1. In terms of biological role, component of the acetyl coenzyme A carboxylase (ACC) complex. Biotin carboxylase (BC) catalyzes the carboxylation of biotin on its carrier protein (BCCP) and then the CO(2) group is transferred by the transcarboxylase to acetyl-CoA to form malonyl-CoA. The polypeptide is Acetyl-coenzyme A carboxylase carboxyl transferase subunit beta (Pseudomonas syringae pv. tomato (strain ATCC BAA-871 / DC3000)).